The chain runs to 161 residues: Nucleotide-binding protein Bamb_2603 (161 aa).

Belongs to the YajQ family.

Its function is as follows. Nucleotide-binding protein. This Burkholderia ambifaria (strain ATCC BAA-244 / DSM 16087 / CCUG 44356 / LMG 19182 / AMMD) (Burkholderia cepacia (strain AMMD)) protein is Nucleotide-binding protein Bamb_2603.